Here is a 419-residue protein sequence, read N- to C-terminus: Tyrosine--tRNA ligase 2 (419 aa).

Position 34 (Y34) interacts with L-tyrosine. Positions 39–48 (PTGDSMHIGH) match the 'HIGH' region motif. L-tyrosine-binding residues include Y168 and Q172. Positions 230–234 (KFGKS) match the 'KMSKS' region motif. An ATP-binding site is contributed by K233. An S4 RNA-binding domain is found at 352–418 (KNIVEWLVDL…GKKNYSLVKL (67 aa)).

Belongs to the class-I aminoacyl-tRNA synthetase family. TyrS type 1 subfamily. In terms of assembly, homodimer.

Its subcellular location is the cytoplasm. The catalysed reaction is tRNA(Tyr) + L-tyrosine + ATP = L-tyrosyl-tRNA(Tyr) + AMP + diphosphate + H(+). Its function is as follows. Catalyzes the attachment of tyrosine to tRNA(Tyr) in a two-step reaction: tyrosine is first activated by ATP to form Tyr-AMP and then transferred to the acceptor end of tRNA(Tyr). The polypeptide is Tyrosine--tRNA ligase 2 (Bacillus thuringiensis subsp. konkukian (strain 97-27)).